The chain runs to 60 residues: Large ribosomal subunit protein bL32 (60 aa).

The span at 1–20 (MAVPKRKTSPSRRNMRRSHH) shows a compositional bias: basic residues. The segment at 1-60 (MAVPKRKTSPSRRNMRRSHHALGANSFIEDKDTGELRRPHHVDLKTGMYNGKQILTPKED) is disordered. Positions 28–44 (IEDKDTGELRRPHHVDL) are enriched in basic and acidic residues.

It belongs to the bacterial ribosomal protein bL32 family.

This Caulobacter vibrioides (strain ATCC 19089 / CIP 103742 / CB 15) (Caulobacter crescentus) protein is Large ribosomal subunit protein bL32.